Consider the following 124-residue polypeptide: Small ribosomal subunit protein uS13 (124 aa).

The disordered stretch occupies residues 98 to 124; sequence VRGQRTKTNARTRKGPKRTIAGKKKAR.

Belongs to the universal ribosomal protein uS13 family. In terms of assembly, part of the 30S ribosomal subunit. Forms a loose heterodimer with protein S19. Forms two bridges to the 50S subunit in the 70S ribosome.

Located at the top of the head of the 30S subunit, it contacts several helices of the 16S rRNA. In the 70S ribosome it contacts the 23S rRNA (bridge B1a) and protein L5 of the 50S subunit (bridge B1b), connecting the 2 subunits; these bridges are implicated in subunit movement. Contacts the tRNAs in the A and P-sites. This chain is Small ribosomal subunit protein uS13, found in Mycobacterium leprae (strain Br4923).